Reading from the N-terminus, the 316-residue chain is Protoheme IX farnesyltransferase (316 aa).

The next 9 membrane-spanning stretches (helical) occupy residues 32–52 (VMSL…GHIH), 53–73 (PVLG…SGAL), 93–113 (IPAG…LSGF), 116–136 (VILG…TIFF), 152–172 (NIVI…ACVT), 180–200 (TVLF…LALF), 221–241 (VTKH…ILPS), 252–271 (LVAA…VWRM), and 289–309 (IFYL…SIFV).

It belongs to the UbiA prenyltransferase family. Protoheme IX farnesyltransferase subfamily.

Its subcellular location is the cell inner membrane. It carries out the reaction heme b + (2E,6E)-farnesyl diphosphate + H2O = Fe(II)-heme o + diphosphate. It participates in porphyrin-containing compound metabolism; heme O biosynthesis; heme O from protoheme: step 1/1. Converts heme B (protoheme IX) to heme O by substitution of the vinyl group on carbon 2 of heme B porphyrin ring with a hydroxyethyl farnesyl side group. The chain is Protoheme IX farnesyltransferase from Rhizobium leguminosarum bv. trifolii (strain WSM2304).